The following is a 243-amino-acid chain: Ribonuclease 3 (243 aa).

Residues 19–144 (FNTLHKLLGF…LVGAIYLDRG (126 aa)) enclose the RNase III domain. A Mg(2+)-binding site is contributed by E61. Residue D65 is part of the active site. Mg(2+) is bound by residues N130 and E133. E133 is an active-site residue. One can recognise a DRBM domain in the interval 172-240 (SYKSLLIEWC…SKRAYYALQN (69 aa)).

This sequence belongs to the ribonuclease III family. Homodimer. The cofactor is Mg(2+).

It localises to the cytoplasm. The enzyme catalyses Endonucleolytic cleavage to 5'-phosphomonoester.. Digests double-stranded RNA. Involved in the processing of primary rRNA transcript to yield the immediate precursors to the large and small rRNAs (23S and 16S). Processes some mRNAs, and tRNAs when they are encoded in the rRNA operon. Processes pre-crRNA and tracrRNA of type II CRISPR loci if present in the organism. This Zunongwangia profunda (strain DSM 18752 / CCTCC AB 206139 / SM-A87) (Wangia profunda) protein is Ribonuclease 3 (rnc).